The primary structure comprises 1475 residues: Mediator of RNA polymerase II transcription subunit 1.1 (1475 aa).

Disordered regions lie at residues 579–600 (STIGRTRPQPRPKREPNQLTSM), 645–894 (GLAS…KMRE), and 908–1475 (PDVE…IDDE). The segment covering 655 to 666 (PVAAAAAAPGGP) has biased composition (low complexity). Residues 755–766 (QRSSSEQHNPNP) show a composition bias toward polar residues. Low complexity predominate over residues 767–800 (HQMSQYQMQQYQQNQQFRMHQMQQQQQQQFQMQS). The span at 810-819 (TDEDSDEECD) shows a compositional bias: acidic residues. Over residues 829–838 (STSSRMSSVP) the composition is skewed to low complexity. A compositionally biased stretch (pro residues) spans 869–880 (TPSPLSAPPKPF). A compositionally biased stretch (low complexity) spans 915-929 (QQLSSSSSSSQAEAS). Residues 941-952 (PPKPSSSSAPPP) are compositionally biased toward pro residues. Low complexity-rich tracts occupy residues 969-989 (QQEQALQKQLQQQESVESELA) and 1037-1049 (QKPTDTSSQSTSS). Basic and acidic residues-rich tracts occupy residues 1052-1070 (PPKKEPADEQPEREKEKLI), 1080-1148 (VVDD…EKEP), and 1155-1180 (EKKDEKEKDRREPERKKGKSDGKEYS). Positions 1098–1135 (DRDRDEDREKVRDKEDKAQREKDKKEKERERRRQRDRD) form a coiled coil. Over residues 1181–1193 (KASTTSLIPTLSL) the composition is skewed to polar residues. Over residues 1199 to 1215 (PKKDTVEEEKKDVKEEA) the composition is skewed to basic and acidic residues. Over residues 1242-1252 (APVAPAVQQQQ) the composition is skewed to low complexity. Positions 1281-1291 (PLQPPPPPQMT) are enriched in pro residues. The span at 1308 to 1317 (PGSSRPSGNR) shows a compositional bias: polar residues. Composition is skewed to pro residues over residues 1320–1334 (PLPPPPPMIRGPPPD) and 1425–1440 (PPAPPPPQMIPLPKDP).

It belongs to the Mediator complex subunit 1 family. In terms of assembly, component of the Mediator complex.

Its subcellular location is the nucleus. Component of the Mediator complex, a coactivator involved in the regulated transcription of nearly all RNA polymerase II-dependent genes. Mediator functions as a bridge to convey information from gene-specific regulatory proteins to the basal RNA polymerase II transcription machinery. Mediator is recruited to promoters by direct interactions with regulatory proteins and serves as a scaffold for the assembly of a functional preinitiation complex with RNA polymerase II and the general transcription factors. The protein is Mediator of RNA polymerase II transcription subunit 1.1 (sop-3) of Caenorhabditis elegans.